We begin with the raw amino-acid sequence, 219 residues long: Probable GTP-binding protein EngB (219 aa).

The 175-residue stretch at 31–205 (VGVEIAFAGR…LSILNEWCHP (175 aa)) folds into the EngB-type G domain. Residues 39-46 (GRSNAGKS), 66-70 (GRTQL), 84-87 (DLPG), 151-154 (TKSD), and 184-186 (FSA) each bind GTP. Residues Ser46 and Thr68 each contribute to the Mg(2+) site.

It belongs to the TRAFAC class TrmE-Era-EngA-EngB-Septin-like GTPase superfamily. EngB GTPase family. Mg(2+) is required as a cofactor.

Functionally, necessary for normal cell division and for the maintenance of normal septation. The polypeptide is Probable GTP-binding protein EngB (Shewanella sp. (strain W3-18-1)).